We begin with the raw amino-acid sequence, 112 residues long: 2Fe-2S ferredoxin (112 aa).

The 2Fe-2S ferredoxin-type domain maps to 1–104 (MPQIVILPHA…DLVVEIPKYT (104 aa)). [2Fe-2S] cluster is bound by residues Cys42, Cys48, Cys51, and Cys87.

This sequence belongs to the adrenodoxin/putidaredoxin family. It depends on [2Fe-2S] cluster as a cofactor.

Its function is as follows. Ferredoxin are iron-sulfur proteins that transfer electrons in a wide variety of metabolic reactions. The sequence is that of 2Fe-2S ferredoxin (fdx) from Pseudomonas aeruginosa (strain ATCC 15692 / DSM 22644 / CIP 104116 / JCM 14847 / LMG 12228 / 1C / PRS 101 / PAO1).